Consider the following 790-residue polypeptide: Cadherin-20 (790 aa).

A signal peptide spans 1 to 25; sequence MSCKRSYHRHCALVYYMVLLDLTNA. The propeptide occupies 26-52; sequence VFEFSHPLIRDSGNSQSRQLLHHRLKR. Residues 26–612 are Extracellular-facing; the sequence is VFEFSHPLIR…PYTLPISLSR (587 aa). 5 consecutive Cadherin domains span residues 54–158, 159–267, 268–382, 383–487, and 487–605; these read WVWN…EPKF, LDGP…PPRF, PQKH…PPVF, GSSF…APTF, and FTKF…EPYT. N-linked (GlcNAc...) asparagine glycans are attached at residues Asn-254, Asn-283, Asn-413, Asn-454, and Asn-535. A helical membrane pass occupies residues 613–633; the sequence is GALIAILTCIFVLLVLVLLIL. Residues 634-790 lie on the Cytoplasmic side of the membrane; that stretch reads SMRRHRKQPY…YGTKDNNGSL (157 aa).

As to expression, detected in embryonic posterior neural plate, embryonic neural tube, sulcus limitans and embryonic kidney.

It localises to the cell membrane. Cadherins are calcium-dependent cell adhesion proteins. They preferentially interact with themselves in a homophilic manner in connecting cells; cadherins may thus contribute to the sorting of heterogeneous cell types. The polypeptide is Cadherin-20 (cdh20) (Xenopus laevis (African clawed frog)).